A 416-amino-acid polypeptide reads, in one-letter code: Transcription termination factor Rho (416 aa).

The 71-residue stretch at 51-121 (LIYSYGELDI…LKLIYVNGEK (71 aa)) folds into the Rho RNA-BD domain. Residues 162–167 (GKGQRG), 174–179 (KAGKTT), and R205 each bind ATP.

Belongs to the Rho family. Homohexamer. The homohexamer assembles into an open ring structure.

Functionally, facilitates transcription termination by a mechanism that involves Rho binding to the nascent RNA, activation of Rho's RNA-dependent ATPase activity, and release of the mRNA from the DNA template. The chain is Transcription termination factor Rho from Streptobacillus moniliformis (strain ATCC 14647 / DSM 12112 / NCTC 10651 / 9901).